A 131-amino-acid polypeptide reads, in one-letter code: Profilin-6 (131 aa).

Belongs to the profilin family. In terms of assembly, occurs in many kinds of cells as a complex with monomeric actin in a 1:1 ratio.

Its subcellular location is the cytoplasm. It is found in the cytoskeleton. Functionally, binds to actin and affects the structure of the cytoskeleton. At high concentrations, profilin prevents the polymerization of actin, whereas it enhances it at low concentrations. By binding to PIP2, it inhibits the formation of IP3 and DG. This chain is Profilin-6, found in Hevea brasiliensis (Para rubber tree).